We begin with the raw amino-acid sequence, 174 residues long: MSKRRKNQGYLAIIAAVSIGAAAYLWWRNHSEDDSVSKFNQQDDGTAQDNQIKEKPAIKLGKKRLHRSLCVIISNKLSNLVELDWDEILQEDIVFLILPSVNDFQNSNDIKTDTHKIINCDTELGLWACVRTLKKNELLVCADDIKVPDDIGRYCDKISQIKSSQQLMNYLDET.

A helical membrane pass occupies residues 9 to 27 (GYLAIIAAVSIGAAAYLWW).

The protein belongs to the peroxin-22 family.

Its subcellular location is the peroxisome membrane. Its function is as follows. Involved in peroxisome biogenesis. This chain is Peroxisome assembly protein 22 (PEX22), found in Candida glabrata (strain ATCC 2001 / BCRC 20586 / JCM 3761 / NBRC 0622 / NRRL Y-65 / CBS 138) (Yeast).